The chain runs to 288 residues: Pyridoxal kinase PdxY (288 aa).

Substrate contacts are provided by residues Ser-9 and 44-45 (TQ). ATP is bound by residues Asp-111, Glu-148, and Lys-181. Asp-224 provides a ligand contact to substrate.

This sequence belongs to the pyridoxine kinase family. PdxY subfamily. Homodimer. Mg(2+) serves as cofactor.

It carries out the reaction pyridoxal + ATP = pyridoxal 5'-phosphate + ADP + H(+). It participates in cofactor metabolism; pyridoxal 5'-phosphate salvage; pyridoxal 5'-phosphate from pyridoxal: step 1/1. Pyridoxal kinase involved in the salvage pathway of pyridoxal 5'-phosphate (PLP). Catalyzes the phosphorylation of pyridoxal to PLP. The sequence is that of Pyridoxal kinase PdxY from Haemophilus influenzae (strain PittEE).